Reading from the N-terminus, the 226-residue chain is Large ribosomal subunit protein uL3 (226 aa).

The span at 135–150 (MSSQRASHGNSRSHNV) shows a compositional bias: polar residues. The disordered stretch occupies residues 135–158 (MSSQRASHGNSRSHNVPGSIGMAQ). Gln158 carries the post-translational modification N5-methylglutamine.

This sequence belongs to the universal ribosomal protein uL3 family. In terms of assembly, part of the 50S ribosomal subunit. Forms a cluster with proteins L14 and L19. In terms of processing, methylated by PrmB.

Its function is as follows. One of the primary rRNA binding proteins, it binds directly near the 3'-end of the 23S rRNA, where it nucleates assembly of the 50S subunit. The chain is Large ribosomal subunit protein uL3 from Variovorax paradoxus (strain S110).